Reading from the N-terminus, the 215-residue chain is Mediator of RNA polymerase II transcription subunit 8 (215 aa).

Residues 27–89 are a coiled coil; sequence LDALRMKFSQ…YEETLDATVA (63 aa).

This sequence belongs to the Mediator complex subunit 8 family. Component of the Mediator complex.

It localises to the nucleus. In terms of biological role, component of the Mediator complex, a coactivator involved in the regulated transcription of nearly all RNA polymerase II-dependent genes. Mediator functions as a bridge to convey information from gene-specific regulatory proteins to the basal RNA polymerase II transcription machinery. Mediator is recruited to promoters by direct interactions with regulatory proteins and serves as a scaffold for the assembly of a functional preinitiation complex with RNA polymerase II and the general transcription factors. This is Mediator of RNA polymerase II transcription subunit 8 (MED8) from Kluyveromyces lactis (strain ATCC 8585 / CBS 2359 / DSM 70799 / NBRC 1267 / NRRL Y-1140 / WM37) (Yeast).